A 267-amino-acid polypeptide reads, in one-letter code: 4-hydroxy-tetrahydrodipicolinate reductase (267 aa).

NAD(+)-binding positions include 8-13 (GAAGRM) and Asp34. An NADP(+)-binding site is contributed by Arg35. NAD(+)-binding positions include 98 to 100 (GTT) and 122 to 125 (AANF). His155 acts as the Proton donor/acceptor in catalysis. A (S)-2,3,4,5-tetrahydrodipicolinate-binding site is contributed by His156. The Proton donor role is filled by Lys159. Position 165-166 (165-166 (GT)) interacts with (S)-2,3,4,5-tetrahydrodipicolinate.

Belongs to the DapB family.

It is found in the cytoplasm. The catalysed reaction is (S)-2,3,4,5-tetrahydrodipicolinate + NAD(+) + H2O = (2S,4S)-4-hydroxy-2,3,4,5-tetrahydrodipicolinate + NADH + H(+). It catalyses the reaction (S)-2,3,4,5-tetrahydrodipicolinate + NADP(+) + H2O = (2S,4S)-4-hydroxy-2,3,4,5-tetrahydrodipicolinate + NADPH + H(+). The protein operates within amino-acid biosynthesis; L-lysine biosynthesis via DAP pathway; (S)-tetrahydrodipicolinate from L-aspartate: step 4/4. In terms of biological role, catalyzes the conversion of 4-hydroxy-tetrahydrodipicolinate (HTPA) to tetrahydrodipicolinate. The sequence is that of 4-hydroxy-tetrahydrodipicolinate reductase from Pseudomonas putida (strain GB-1).